A 192-amino-acid polypeptide reads, in one-letter code: Secreted phosphoprotein 24 (192 aa).

The first 29 residues, 1–29, serve as a signal peptide directing secretion; it reads MGKTPEDFERHTMRSLIFVLALSVFTCSG. Intrachain disulfides connect C92-C103 and C116-C134. The tract at residues 155–192 is disordered; sequence TDPRKRGSSRSEAFSSRGRGHSNGDWRKPDYTSPGKVE.

This sequence belongs to the SPP2 family. In terms of processing, multiply phosphorylated at serine residues.

It is found in the secreted. Functionally, could coordinate an aspect of bone turnover. This is Secreted phosphoprotein 24 (SPP2) from Gallus gallus (Chicken).